The chain runs to 217 residues: Probable transaldolase (217 aa).

Lysine 83 acts as the Schiff-base intermediate with substrate in catalysis.

This sequence belongs to the transaldolase family. Type 3B subfamily.

It localises to the cytoplasm. The catalysed reaction is D-sedoheptulose 7-phosphate + D-glyceraldehyde 3-phosphate = D-erythrose 4-phosphate + beta-D-fructose 6-phosphate. It participates in carbohydrate degradation; pentose phosphate pathway; D-glyceraldehyde 3-phosphate and beta-D-fructose 6-phosphate from D-ribose 5-phosphate and D-xylulose 5-phosphate (non-oxidative stage): step 2/3. Its function is as follows. Transaldolase is important for the balance of metabolites in the pentose-phosphate pathway. In Caulobacter vibrioides (strain NA1000 / CB15N) (Caulobacter crescentus), this protein is Probable transaldolase.